Consider the following 169-residue polypeptide: Sorting nexin-24 (169 aa).

An N-acetylmethionine modification is found at M1. Residues 1–125 form the PX domain; that stretch reads MEVYIPSFRY…SFDETESEES (125 aa). Positions 38, 40, 61, and 74 each coordinate a 1,2-diacyl-sn-glycero-3-phospho-(1D-myo-inositol-3-phosphate). S113 and S116 each carry phosphoserine.

The protein belongs to the sorting nexin family.

Its subcellular location is the cytoplasmic vesicle membrane. Its function is as follows. May be involved in several stages of intracellular trafficking. In Bos taurus (Bovine), this protein is Sorting nexin-24 (SNX24).